The following is a 193-amino-acid chain: ATP synthase subunit b 1 (193 aa).

Residues 13–32 form a disordered region; it reads PAVTGGDTHSGTGVPAEAHG. The helical transmembrane segment at 40-60 threads the bilayer; that stretch reads ATFPSQLLWLAITFGLFYLFL.

Belongs to the ATPase B chain family. As to quaternary structure, F-type ATPases have 2 components, F(1) - the catalytic core - and F(0) - the membrane proton channel. F(1) has five subunits: alpha(3), beta(3), gamma(1), delta(1), epsilon(1). F(0) has three main subunits: a(1), b(2) and c(10-14). The alpha and beta chains form an alternating ring which encloses part of the gamma chain. F(1) is attached to F(0) by a central stalk formed by the gamma and epsilon chains, while a peripheral stalk is formed by the delta and b chains.

Its subcellular location is the cell inner membrane. Its function is as follows. F(1)F(0) ATP synthase produces ATP from ADP in the presence of a proton or sodium gradient. F-type ATPases consist of two structural domains, F(1) containing the extramembraneous catalytic core and F(0) containing the membrane proton channel, linked together by a central stalk and a peripheral stalk. During catalysis, ATP synthesis in the catalytic domain of F(1) is coupled via a rotary mechanism of the central stalk subunits to proton translocation. Functionally, component of the F(0) channel, it forms part of the peripheral stalk, linking F(1) to F(0). The polypeptide is ATP synthase subunit b 1 (Mesorhizobium japonicum (strain LMG 29417 / CECT 9101 / MAFF 303099) (Mesorhizobium loti (strain MAFF 303099))).